Consider the following 498-residue polypeptide: L-amino acid oxidase Cdc18 (498 aa).

An N-terminal signal peptide occupies residues 1–2 (SC). Cys12 and Cys173 form a disulfide bridge. Residues 45-46 (MA), 65-66 (EA), Arg73, and 87-90 (GPMR) each bind FAD. Substrate contacts are provided by Arg90 and His223. Val263 lines the FAD pocket. An intrachain disulfide couples Cys333 to Cys414. Asn363 is a glycosylation site (N-linked (GlcNAc...) asparagine). Tyr374 is a substrate binding site. Residues Glu459 and 466–471 (GWIDST) contribute to the FAD site. 466-467 (GW) contributes to the substrate binding site.

The protein belongs to the flavin monoamine oxidase family. FIG1 subfamily. Monomer. This is in contrast with most of its orthologs, that are non-covalently linked homodimers. FAD is required as a cofactor. Expressed by the venom gland.

Its subcellular location is the secreted. The enzyme catalyses an L-alpha-amino acid + O2 + H2O = a 2-oxocarboxylate + H2O2 + NH4(+). The catalysed reaction is L-leucine + O2 + H2O = 4-methyl-2-oxopentanoate + H2O2 + NH4(+). Catalyzes an oxidative deamination of predominantly hydrophobic and aromatic L-amino acids, thus producing hydrogen peroxide that may contribute to the diverse toxic effects of this enzyme. Shows activity on L-Leu. Damages cell membranes of the Gram-positive bacteria S.aureus (MIC=8 ug/ml and MBC=16 ug/ml) and the Gram-negative bacteria A.baumannii (MIC=16 ug/ml and MBC=32 ug/ml). This antimicrobial activity is dependent on the production of hydrogen peroxyde, since it is inhibited by catalase, a hydrogen peroxyde scavenger. This Crotalus durissus cumanensis (South American rattlesnake) protein is L-amino acid oxidase Cdc18.